The chain runs to 358 residues: MLATPTIESPEEAARRAKESTLLSPRFYTTDYAAMNAIDVSSIRAEWDAMLAEYEGDNNHDHFQRTPEFAQEVAERFSQVSPELRQEFLDFLVSSVTSEFSGCVLYNEIQKNVENPDVKALMRYMARNESRHAGFINQALRDFGLGINLGGLKRTKAYTYFKPKYIFYATYLSEKIGYARYITIYRQLERHPDKRFHPIFRWFERWCNDEFRHGESFALILRAHPHLISGANLLWVRFFLLAVYATMYVRDHMRPQLHEAMGLESTDYDYRVFQITNEISKQVFPISLDIDHQAFRAGMERLVRVKTKVDAAKARGGLVGRLQQAAWAAAGAATFARMYLIPVRRHALPAQVRMAPAW.

It belongs to the AcsF family. It depends on Fe cation as a cofactor.

It carries out the reaction Mg-protoporphyrin IX 13-monomethyl ester + 3 NADPH + 3 O2 + 2 H(+) = 3,8-divinyl protochlorophyllide a + 3 NADP(+) + 5 H2O. It participates in porphyrin-containing compound metabolism; chlorophyll biosynthesis. Functionally, catalyzes the formation of the isocyclic ring in chlorophyll biosynthesis in aerobic conditions. Mediates the cyclase reaction, which results in the formation of divinylprotochlorophyllide (Pchlide) characteristic of all chlorophylls from magnesium-protoporphyrin IX 13-monomethyl ester (MgPMME). This is Aerobic magnesium-protoporphyrin IX monomethyl ester [oxidative] cyclase from Rubrivivax gelatinosus (Rhodocyclus gelatinosus).